Consider the following 462-residue polypeptide: Ketoisovalerate reductase (462 aa).

Positions 34–55 (PTAVKPDRADRGDFDPGKYPVD) are disordered. Over residues 38-49 (KPDRADRGDFDP) the composition is skewed to basic and acidic residues. NADP(+) is bound at residue 72 to 77 (GPGNVG). Residues 167-184 (ADRLRRYLGRCSSVVFAQ) carry the Calmoduling-binding motif. K290 serves as the catalytic Proton donor. Positions 294, 298, and 403 each coordinate substrate. NADP(+) is bound at residue E415.

This sequence belongs to the ketopantoate reductase family. In terms of assembly, homodimer. Binds to calmodulin in a calcium-independent manner.

It catalyses the reaction (R)-2-hydroxy-3-methylbutanoate + NADP(+) = 3-methyl-2-oxobutanoate + NADPH + H(+). Environmental stimuli such as light and salt stress suppress activity through stimulation of calmodulin (CaM) that binds BEA2 and probably impairs its dimerization. In terms of biological role, ketoisovalerate reductase; part of the gene cluster that mediates the biosynthesis of beauvericin (BEA), a non-ribosomal cyclic hexadepsipeptide that shows antibiotic, antifungal, insecticidal, and cancer cell antiproliferative and antihaptotactic activity. Ketoisovalerate reductase BEA2 catalyzes the NADPH-specific reduction of ketoisovaleric acid to hydroxyisovalerate, a precursor for beauvericin biosynthesis. The nonribosomal cyclodepsipeptide synthetase BEA1 then catalyzes the formation of beauvericin via condensation and cyclization of 3 dipeptidol monomers, each composed of one unit of hydroxyisovalerate and one unit of N-methyl-phenylalanine. The protein is Ketoisovalerate reductase of Beauveria bassiana (White muscardine disease fungus).